The following is a 91-amino-acid chain: Small ribosomal subunit protein uS19 (91 aa).

Belongs to the universal ribosomal protein uS19 family.

In terms of biological role, protein S19 forms a complex with S13 that binds strongly to the 16S ribosomal RNA. The polypeptide is Small ribosomal subunit protein uS19 (Amoebophilus asiaticus (strain 5a2)).